A 126-amino-acid chain; its full sequence is MPELAKSAPAPKKGSKKAVTKAQKKDGKKRKRSRKESYSVYVYKVLKQVHPDTGISSKAMGIMNSFVNDIFERIASEASRLAHYNKRSTITSREIQTAVRLLLPGELAKHAVSEGTKAVTKYTSSK.

The segment covering 1–12 has biased composition (low complexity); that stretch reads MPELAKSAPAPK. Positions 1 to 36 are disordered; the sequence is MPELAKSAPAPKKGSKKAVTKAQKKDGKKRKRSRKE. Position 2 is an N-acetylproline (proline 2). The residue at position 3 (glutamate 3) is an ADP-ribosyl glutamic acid. Lysine 6 bears the N6-(2-hydroxyisobutyryl)lysine; alternate mark. Position 6 is an N6-(beta-hydroxybutyryl)lysine; alternate (lysine 6). Lysine 6 is modified (N6-acetyllysine; alternate). Lysine 6 bears the N6-butyryllysine; alternate mark. Lysine 6 is subject to N6-crotonyllysine; alternate. Lysine 6 carries the N6-lactoyllysine; alternate modification. A Glycyl lysine isopeptide (Lys-Gly) (interchain with G-Cter in SUMO2); alternate cross-link involves residue lysine 6. Residue serine 7 is modified to ADP-ribosylserine. Lysine 12 is modified (N6-(beta-hydroxybutyryl)lysine; alternate). Residues lysine 12 and lysine 13 each carry the N6-acetyllysine; alternate modification. N6-crotonyllysine; alternate occurs at positions 12 and 13. Residue lysine 12 is modified to N6-lactoyllysine; alternate. Lysine 13 carries the N6-(2-hydroxyisobutyryl)lysine; alternate modification. Serine 15 is modified (phosphoserine; by STK4/MST1). Residues lysine 16, lysine 17, lysine 21, and lysine 24 each carry the N6-acetyllysine; alternate modification. 4 positions are modified to N6-crotonyllysine; alternate: lysine 16, lysine 17, lysine 21, and lysine 24. Residues lysine 16, lysine 17, lysine 21, and lysine 24 each carry the N6-lactoyllysine; alternate modification. Residues lysine 17 and lysine 21 each carry the N6-(beta-hydroxybutyryl)lysine; alternate modification. An N6-glutaryllysine; alternate modification is found at lysine 17. An N6-(2-hydroxyisobutyryl)lysine; alternate mark is found at lysine 21 and lysine 24. Lysine 21 is subject to N6-butyryllysine; alternate. Residue lysine 21 forms a Glycyl lysine isopeptide (Lys-Gly) (interchain with G-Cter in SUMO2); alternate linkage. Lysine 25 carries the N6-(2-hydroxyisobutyryl)lysine modification. An N6-(2-hydroxyisobutyryl)lysine; alternate modification is found at lysine 35. Lysine 35 is modified (N6-(beta-hydroxybutyryl)lysine; alternate). The residue at position 35 (lysine 35) is an N6-crotonyllysine; alternate. Lysine 35 is subject to N6-glutaryllysine; alternate. An N6-succinyllysine; alternate modification is found at lysine 35. Residue lysine 35 forms a Glycyl lysine isopeptide (Lys-Gly) (interchain with G-Cter in ubiquitin); alternate linkage. Glutamate 36 is subject to PolyADP-ribosyl glutamic acid. Phosphoserine; by AMPK is present on serine 37. Lysine 44, lysine 47, and lysine 58 each carry N6-(2-hydroxyisobutyryl)lysine; alternate. Lysine 44 bears the N6-lactoyllysine; alternate mark. 2 positions are modified to N6-glutaryllysine; alternate: lysine 44 and lysine 47. Lysine 47 is modified (N6-methyllysine; alternate). Lysine 58 bears the N6,N6-dimethyllysine; alternate mark. Arginine 80 carries the dimethylated arginine modification. An N6-(2-hydroxyisobutyryl)lysine; alternate modification is found at lysine 86. Lysine 86 carries the N6-(beta-hydroxybutyryl)lysine; alternate modification. Lysine 86 bears the N6-acetyllysine; alternate mark. Lysine 86 is modified (N6-lactoyllysine; alternate). The residue at position 86 (lysine 86) is an N6,N6,N6-trimethyllysine; alternate. Arginine 87 and arginine 93 each carry omega-N-methylarginine. Lysine 109 carries the post-translational modification N6-(2-hydroxyisobutyryl)lysine; alternate. Lysine 109 bears the N6-lactoyllysine; alternate mark. Lysine 109 bears the N6-glutaryllysine; alternate mark. The residue at position 109 (lysine 109) is an N6-methyllysine; alternate. A glycan (O-linked (GlcNAc) serine) is linked at serine 113. A Phosphothreonine modification is found at threonine 116. N6-(2-hydroxyisobutyryl)lysine; alternate is present on residues lysine 117 and lysine 121. 2 positions are modified to N6-(beta-hydroxybutyryl)lysine; alternate: lysine 117 and lysine 121. N6-lactoyllysine; alternate occurs at positions 117 and 121. N6-glutaryllysine; alternate occurs at positions 117 and 121. 2 positions are modified to N6-succinyllysine; alternate: lysine 117 and lysine 121. Residue lysine 117 is modified to N6-malonyllysine; alternate. Position 117 is an N6-methylated lysine; alternate (lysine 117). Lysine 121 participates in a covalent cross-link: Glycyl lysine isopeptide (Lys-Gly) (interchain with G-Cter in ubiquitin); alternate.

The protein belongs to the histone H2B family. In terms of assembly, the nucleosome is a histone octamer containing two molecules each of H2A, H2B, H3 and H4 assembled in one H3-H4 heterotetramer and two H2A-H2B heterodimers. The octamer wraps approximately 147 bp of DNA. In terms of processing, monoubiquitination at Lys-35 (H2BK34Ub) by the MSL1/MSL2 dimer is required for histone H3 'Lys-4' (H3K4me) and 'Lys-79' (H3K79me) methylation and transcription activation at specific gene loci, such as HOXA9 and MEIS1 loci. Similarly, monoubiquitination at Lys-121 (H2BK120Ub) by the RNF20/40 complex gives a specific tag for epigenetic transcriptional activation and is also prerequisite for histone H3 'Lys-4' and 'Lys-79' methylation. It also functions cooperatively with the FACT dimer to stimulate elongation by RNA polymerase II. H2BK120Ub also acts as a regulator of mRNA splicing: deubiquitination by USP49 is required for efficient cotranscriptional splicing of a large set of exons. Post-translationally, phosphorylation at Ser-37 (H2BS36ph) by AMPK in response to stress promotes transcription. Phosphorylated on Ser-15 (H2BS14ph) by STK4/MST1 during apoptosis; which facilitates apoptotic chromatin condensation. Also phosphorylated on Ser-15 in response to DNA double strand breaks (DSBs), and in correlation with somatic hypermutation and immunoglobulin class-switch recombination. GlcNAcylation at Ser-113 promotes monoubiquitination of Lys-121. It fluctuates in response to extracellular glucose, and associates with transcribed genes. In terms of processing, ADP-ribosylated by PARP1 or PARP2 on Ser-7 (H2BS6ADPr) in response to DNA damage. H2BS6ADPr promotes recruitment of CHD1L. Mono-ADP-ribosylated on Glu-3 (H2BE2ADPr) by PARP3 in response to single-strand breaks. Poly ADP-ribosylation on Glu-36 (H2BE35ADPr) by PARP1 regulates adipogenesis: it inhibits phosphorylation at Ser-37 (H2BS36ph), thereby blocking expression of pro-adipogenetic genes. Post-translationally, crotonylation (Kcr) is specifically present in male germ cells and marks testis-specific genes in post-meiotic cells, including X-linked genes that escape sex chromosome inactivation in haploid cells. Crotonylation marks active promoters and enhancers and confers resistance to transcriptional repressors. It is also associated with post-meiotically activated genes on autosomes. Lactylated in macrophages by EP300/P300 by using lactoyl-CoA directly derived from endogenous or exogenous lactate, leading to stimulates gene transcription.

Its subcellular location is the nucleus. The protein localises to the chromosome. Core component of nucleosome. Nucleosomes wrap and compact DNA into chromatin, limiting DNA accessibility to the cellular machineries which require DNA as a template. Histones thereby play a central role in transcription regulation, DNA repair, DNA replication and chromosomal stability. DNA accessibility is regulated via a complex set of post-translational modifications of histones, also called histone code, and nucleosome remodeling. The protein is Histone H2B type 1-L of Homo sapiens (Human).